Reading from the N-terminus, the 65-residue chain is Kunitz-type serine protease inhibitor IX (65 aa).

Positions 7-57 (CNLLPETGRCNALIPAFYYNSHLHKCQKFNYGGCGGNANNFKTIDECQRTC) constitute a BPTI/Kunitz inhibitor domain. Disulfide bonds link C7-C57, C16-C40, and C32-C53.

Belongs to the venom Kunitz-type family. In terms of tissue distribution, expressed by the venom gland.

The protein resides in the secreted. Its function is as follows. Dual-function toxin that inhibits both serine proteases (high activity on chymotrypsin (Ki = 18 nM), and low activity on elastase) and voltage-gated potassium channels Kv1.3/KCNA3 (IC(50) = 120.0 nM). The polypeptide is Kunitz-type serine protease inhibitor IX (Bungarus fasciatus (Banded krait)).